The primary structure comprises 122 residues: Large ribosomal subunit protein uL18 (122 aa).

A disordered region spans residues 1 to 26 (MSNLSRKQQTQKRHRRLRRHLKGTAQ). Over residues 9–22 (QTQKRHRRLRRHLK) the composition is skewed to basic residues.

It belongs to the universal ribosomal protein uL18 family. Part of the 50S ribosomal subunit; part of the 5S rRNA/L5/L18/L25 subcomplex. Contacts the 5S and 23S rRNAs.

This is one of the proteins that bind and probably mediate the attachment of the 5S RNA into the large ribosomal subunit, where it forms part of the central protuberance. The polypeptide is Large ribosomal subunit protein uL18 (Prochlorococcus marinus (strain MIT 9313)).